The sequence spans 907 residues: Probable dipeptidyl-aminopeptidase B (907 aa).

Over residues 1–26 the composition is skewed to basic and acidic residues; that stretch reads MPRQRAPKEEEAELLTKQERSTRSSE. The interval 1-70 is disordered; it reads MPRQRAPKEE…EKYTDEDDEA (70 aa). Topologically, residues 1-93 are cytoplasmic; sequence MPRQRAPKEE…PVAVDKKTRR (93 aa). The span at 30–44 shows a compositional bias: low complexity; the sequence is DASVSSISTTSLVLE. The chain crosses the membrane as a helical; Signal-anchor for type II membrane protein span at residues 94 to 114; sequence WLWIVGIACVTGWALALVFFL. Over 115–907 the chain is Vacuolar; the sequence is MSGSYKHVST…SQVDARLERR (793 aa). Asn-560 carries an N-linked (GlcNAc...) asparagine glycan. Residue Ser-751 is the Charge relay system of the active site. N-linked (GlcNAc...) asparagine glycosylation occurs at Asn-805. Catalysis depends on charge relay system residues Asp-828 and His-861.

The protein belongs to the peptidase S9B family.

It is found in the vacuole membrane. It carries out the reaction Release of an N-terminal dipeptide, Xaa-Yaa-|-Zaa-, from a polypeptide, preferentially when Yaa is Pro, provided Zaa is neither Pro nor hydroxyproline.. Type IV dipeptidyl-peptidase which removes N-terminal dipeptides sequentially from polypeptides having unsubstituted N-termini provided that the penultimate residue is proline. This Pyrenophora teres f. teres (strain 0-1) (Barley net blotch fungus) protein is Probable dipeptidyl-aminopeptidase B (dapB).